Reading from the N-terminus, the 327-residue chain is DNA-directed RNA polymerase subunit alpha (327 aa).

Residues methionine 1–serine 231 are alpha N-terminal domain (alpha-NTD). An alpha C-terminal domain (alpha-CTD) region spans residues aspartate 247–lysine 327.

It belongs to the RNA polymerase alpha chain family. In terms of assembly, homodimer. The RNAP catalytic core consists of 2 alpha, 1 beta, 1 beta' and 1 omega subunit. When a sigma factor is associated with the core the holoenzyme is formed, which can initiate transcription.

It catalyses the reaction RNA(n) + a ribonucleoside 5'-triphosphate = RNA(n+1) + diphosphate. DNA-dependent RNA polymerase catalyzes the transcription of DNA into RNA using the four ribonucleoside triphosphates as substrates. This is DNA-directed RNA polymerase subunit alpha from Chlorobium chlorochromatii (strain CaD3).